A 362-amino-acid polypeptide reads, in one-letter code: Very-long-chain (3R)-3-hydroxyacyl-CoA dehydratase 3 (362 aa).

Met-1 bears the N-acetylmethionine mark. Residues 1–149 (MENQVLTPHV…ETLTSLKKGY (149 aa)) are Cytoplasmic-facing. Positions 5–94 (VLTPHVYWAQ…KESQWWERLT (90 aa)) constitute a CS domain. The residue at position 7 (Thr-7) is a Phosphothreonine. The stretch at 111–136 (LDESDAEMELRAKEEEQLNKLRLESQ) forms a coiled coil. Phosphoserine occurs at positions 114 and 135. The chain crosses the membrane as a helical span at residues 150-170 (LFMYNLVQFLGFSWIFVNMTV). Over 171 to 189 (RFFILGKESFYDTFHTVAD) the chain is Lumenal. Residues 190–210 (MMYFCQMLAAVESINAAIGVT) traverse the membrane as a helical segment. Over 211-212 (KS) the chain is Cytoplasmic. The chain crosses the membrane as a helical span at residues 213–233 (PVVPSLFQLLGRNFILFIIFG). Residues 234–242 (TMEEMQNKA) lie on the Lumenal side of the membrane. The chain crosses the membrane as a helical span at residues 243 to 263 (VVFFVFYIWSTVEIFRYPFYM). The Cytoplasmic segment spans residues 264 to 280 (LSCIDMDWKVLTWLRYT). The helical transmembrane segment at 281–301 (VWIPLYPMGCLAEAVSVIQSI) threads the bilayer. Active-site residues include Tyr-286 and Glu-293. Topologically, residues 302–325 (PVFNETGRFSFTLPYPVKIKVRFS) are lumenal. The helical transmembrane segment at 326 to 346 (FFLQIYLILLFLGLYVNFRYL) threads the bilayer. Residues 347–362 (YKQRRRRFGQKKKKIH) are Cytoplasmic-facing.

The protein belongs to the very long-chain fatty acids dehydratase HACD family. In terms of assembly, may interact with enzymes of the ELO family (including ELOVL1); with those enzymes that mediate condensation, the first of the four steps of the reaction cycle responsible for fatty acids elongation, may be part of a larger fatty acids elongase complex. Interacts with RAC1. Associates with internalized insulin receptor/INSR complexes on Golgi/endosomal membranes; HACD3/PTPLAD1 together with ATIC and PRKAA2/AMPK2 is proposed to be part of a signaling network regulating INSR autophosphorylation and endocytosis.

It is found in the endoplasmic reticulum membrane. It carries out the reaction a very-long-chain (3R)-3-hydroxyacyl-CoA = a very-long-chain (2E)-enoyl-CoA + H2O. The catalysed reaction is (3R)-hydroxyhexadecanoyl-CoA = (2E)-hexadecenoyl-CoA + H2O. It participates in lipid metabolism; fatty acid biosynthesis. Functionally, catalyzes the third of the four reactions of the long-chain fatty acids elongation cycle. This endoplasmic reticulum-bound enzymatic process, allows the addition of two carbons to the chain of long- and very long-chain fatty acids/VLCFAs per cycle. This enzyme catalyzes the dehydration of the 3-hydroxyacyl-CoA intermediate into trans-2,3-enoyl-CoA, within each cycle of fatty acid elongation. Thereby, it participates in the production of VLCFAs of different chain lengths that are involved in multiple biological processes as precursors of membrane lipids and lipid mediators. Involved in Rac1-signaling pathways leading to the modulation of gene expression. Promotes insulin receptor/INSR autophosphorylation and is involved in INSR internalization. This chain is Very-long-chain (3R)-3-hydroxyacyl-CoA dehydratase 3, found in Bos taurus (Bovine).